Here is a 247-residue protein sequence, read N- to C-terminus: Sugar fermentation stimulation protein homolog (247 aa).

This sequence belongs to the SfsA family.

The polypeptide is Sugar fermentation stimulation protein homolog (Methanococcoides burtonii (strain DSM 6242 / NBRC 107633 / OCM 468 / ACE-M)).